The following is a 35-amino-acid chain: Photosystem II reaction center protein M (35 aa).

M1 carries the post-translational modification N-formylmethionine. Residues 7–28 (GFIASILFVLVPTVFLLILFIQ) traverse the membrane as a helical segment.

The protein belongs to the PsbM family. As to quaternary structure, PSII is composed of 1 copy each of membrane proteins PsbA, PsbB, PsbC, PsbD, PsbE, PsbF, PsbH, PsbI, PsbJ, PsbK, PsbL, PsbM, PsbT, PsbX, PsbY, PsbZ, Psb30/Ycf12, peripheral proteins PsbO, CyanoQ (PsbQ), PsbU, PsbV and a large number of cofactors. It forms dimeric complexes.

Its subcellular location is the cellular thylakoid membrane. One of the components of the core complex of photosystem II (PSII). PSII is a light-driven water:plastoquinone oxidoreductase that uses light energy to abstract electrons from H(2)O, generating O(2) and a proton gradient subsequently used for ATP formation. It consists of a core antenna complex that captures photons, and an electron transfer chain that converts photonic excitation into a charge separation. This subunit is found at the monomer-monomer interface. Involved in assembly of monomeric PSII from the CP43-less intermediate. The sequence is that of Photosystem II reaction center protein M from Synechocystis sp. (strain ATCC 27184 / PCC 6803 / Kazusa).